The sequence spans 371 residues: Spermatogenic leucine zipper protein 1 (371 aa).

Coiled coils occupy residues E96–D148 and F177–E289. Residue S98 is modified to Phosphoserine. A helix-loop-helix motif region spans residues I110–A120. The interval S121–R188 is basic motif. S202 bears the Phosphoserine mark. Residues K223–S240 show a composition bias toward polar residues. The disordered stretch occupies residues K223–E246. Residues L245–L266 form a leucine-zipper region.

Phosphorylated by MAPK1/ERK2 and MAPK3/ERK1.

The protein resides in the cytoplasm. Its subcellular location is the nucleus. Transcription factor that binds to the DNA sequence 5'-CANNTG-3'(E box) and the G-box motif. May play an important role in the regulation of cell proliferation and differentiation during spermatogenesis. This Bos taurus (Bovine) protein is Spermatogenic leucine zipper protein 1 (SPZ1).